Here is a 426-residue protein sequence, read N- to C-terminus: 3-phosphoshikimate 1-carboxyvinyltransferase (426 aa).

The 3-phosphoshikimate site is built by Lys22, Ser23, and Arg27. Lys22 is a phosphoenolpyruvate binding site. Phosphoenolpyruvate is bound by residues Gly96 and Arg124. 3-phosphoshikimate-binding residues include Ser170 and Ser171. Gln172 is a phosphoenolpyruvate binding site. Residues Ser198, Asp314, Asn337, and Lys341 each contribute to the 3-phosphoshikimate site. The active-site Proton acceptor is Asp314. Positions 345, 387, and 412 each coordinate phosphoenolpyruvate.

The protein belongs to the EPSP synthase family. Homotetramer.

Its subcellular location is the cytoplasm. The catalysed reaction is 3-phosphoshikimate + phosphoenolpyruvate = 5-O-(1-carboxyvinyl)-3-phosphoshikimate + phosphate. It functions in the pathway metabolic intermediate biosynthesis; chorismate biosynthesis; chorismate from D-erythrose 4-phosphate and phosphoenolpyruvate: step 6/7. Its function is as follows. Catalyzes the transfer of the enolpyruvyl moiety of phosphoenolpyruvate (PEP) to the 5-hydroxyl of shikimate-3-phosphate (S3P) to produce enolpyruvyl shikimate-3-phosphate and inorganic phosphate. This is 3-phosphoshikimate 1-carboxyvinyltransferase from Vibrio cholerae serotype O1 (strain ATCC 39315 / El Tor Inaba N16961).